The primary structure comprises 208 residues: Thymidylate kinase (208 aa).

7 to 14 (GIDGSGKS) lines the ATP pocket.

The protein belongs to the thymidylate kinase family.

It catalyses the reaction dTMP + ATP = dTDP + ADP. Functionally, phosphorylation of dTMP to form dTDP in both de novo and salvage pathways of dTTP synthesis. This Kosmotoga olearia (strain ATCC BAA-1733 / DSM 21960 / TBF 19.5.1) protein is Thymidylate kinase.